Here is a 248-residue protein sequence, read N- to C-terminus: Proteasome subunit alpha type-3 (248 aa).

Belongs to the peptidase T1A family. In terms of assembly, the 26S proteasome consists of a 20S proteasome core and two 19S regulatory subunits. The 20S proteasome core is composed of 28 subunits that are arranged in four stacked rings, resulting in a barrel-shaped structure. The two end rings are each formed by seven alpha subunits, and the two central rings are each formed by seven beta subunits. The catalytic chamber with the active sites is on the inside of the barrel.

The protein localises to the cytoplasm. Its subcellular location is the nucleus. Functionally, the proteasome is a multicatalytic proteinase complex which is characterized by its ability to cleave peptides with Arg, Phe, Tyr, Leu, and Glu adjacent to the leaving group at neutral or slightly basic pH. The proteasome has an ATP-dependent proteolytic activity. The chain is Proteasome subunit alpha type-3 (psmA3) from Dictyostelium discoideum (Social amoeba).